We begin with the raw amino-acid sequence, 387 residues long: Succinate--CoA ligase [ADP-forming] subunit beta (387 aa).

The 228-residue stretch at 9 to 236 (KELFAKHNVP…RAATDPLELK (228 aa)) folds into the ATP-grasp domain. ATP is bound by residues lysine 45, 52–54 (GRG), serine 94, and glutamate 99. Mg(2+) is bound by residues asparagine 191 and aspartate 205. Residues asparagine 256 and 318-320 (GIT) each bind substrate.

The protein belongs to the succinate/malate CoA ligase beta subunit family. As to quaternary structure, heterotetramer of two alpha and two beta subunits. Requires Mg(2+) as cofactor.

It carries out the reaction succinate + ATP + CoA = succinyl-CoA + ADP + phosphate. It catalyses the reaction GTP + succinate + CoA = succinyl-CoA + GDP + phosphate. It functions in the pathway carbohydrate metabolism; tricarboxylic acid cycle; succinate from succinyl-CoA (ligase route): step 1/1. Functionally, succinyl-CoA synthetase functions in the citric acid cycle (TCA), coupling the hydrolysis of succinyl-CoA to the synthesis of either ATP or GTP and thus represents the only step of substrate-level phosphorylation in the TCA. The beta subunit provides nucleotide specificity of the enzyme and binds the substrate succinate, while the binding sites for coenzyme A and phosphate are found in the alpha subunit. The chain is Succinate--CoA ligase [ADP-forming] subunit beta from Mycobacterium marinum (strain ATCC BAA-535 / M).